We begin with the raw amino-acid sequence, 544 residues long: Chaperonin GroEL (544 aa).

ATP contacts are provided by residues 30 to 33 (TLGP), Lys-51, 87 to 91 (DGTTT), Gly-415, 481 to 483 (DAL), and Asp-497.

This sequence belongs to the chaperonin (HSP60) family. As to quaternary structure, forms a cylinder of 14 subunits composed of two heptameric rings stacked back-to-back. Interacts with the co-chaperonin GroES.

It is found in the cytoplasm. The catalysed reaction is ATP + H2O + a folded polypeptide = ADP + phosphate + an unfolded polypeptide.. Its function is as follows. Together with its co-chaperonin GroES, plays an essential role in assisting protein folding. The GroEL-GroES system forms a nano-cage that allows encapsulation of the non-native substrate proteins and provides a physical environment optimized to promote and accelerate protein folding. The protein is Chaperonin GroEL of Chlamydia trachomatis serovar D (strain ATCC VR-885 / DSM 19411 / UW-3/Cx).